A 339-amino-acid polypeptide reads, in one-letter code: MREEALQAIQEAPDLPALQAVKTRYLGKSGLVTRELGALGKLPPEERKRRGAELNALRQAIDAALTEREAVLKRAALDARLASEAIDVTLPGLSLPAGGLHPISRVYDDLIRIFERMGYAVVEGPEVEDEHHNFEALNVPWYHPARDLQDTFWLEDGRLLRTHTSPMQVRYMVDHEPPLKVVVRGKVYRYEATDATHESMFHQLEGLVVGDGISMADLKGTVAELARGLYGPSAKVRFQPSYYPFVEPGADFAVWWDNPRGESKWLELGGCGMVHPNVFRAVDDLREAAGKPRVYEGKTGFAFGLGPERIAMLKYGIPDIRYFYANDPRVIGQFRGELG.

Glu-247 is a Mg(2+) binding site.

It belongs to the class-II aminoacyl-tRNA synthetase family. Phe-tRNA synthetase alpha subunit type 1 subfamily. As to quaternary structure, tetramer of two alpha and two beta subunits. It depends on Mg(2+) as a cofactor.

Its subcellular location is the cytoplasm. The catalysed reaction is tRNA(Phe) + L-phenylalanine + ATP = L-phenylalanyl-tRNA(Phe) + AMP + diphosphate + H(+). This Deinococcus geothermalis (strain DSM 11300 / CIP 105573 / AG-3a) protein is Phenylalanine--tRNA ligase alpha subunit.